The sequence spans 286 residues: Light-independent protochlorophyllide reductase iron-sulfur ATP-binding protein (286 aa).

ATP contacts are provided by residues 10–15 and lysine 39; that span reads GIGKST. Serine 14 provides a ligand contact to Mg(2+). Residues cysteine 95 and cysteine 129 each coordinate [4Fe-4S] cluster. ATP is bound at residue 180-181; it reads NR.

It belongs to the NifH/BchL/ChlL family. As to quaternary structure, homodimer. Protochlorophyllide reductase is composed of three subunits; ChlL, ChlN and ChlB. It depends on [4Fe-4S] cluster as a cofactor.

It catalyses the reaction chlorophyllide a + oxidized 2[4Fe-4S]-[ferredoxin] + 2 ADP + 2 phosphate = protochlorophyllide a + reduced 2[4Fe-4S]-[ferredoxin] + 2 ATP + 2 H2O. It functions in the pathway porphyrin-containing compound metabolism; chlorophyll biosynthesis (light-independent). Component of the dark-operative protochlorophyllide reductase (DPOR) that uses Mg-ATP and reduced ferredoxin to reduce ring D of protochlorophyllide (Pchlide) to form chlorophyllide a (Chlide). This reaction is light-independent. The L component serves as a unique electron donor to the NB-component of the complex, and binds Mg-ATP. The protein is Light-independent protochlorophyllide reductase iron-sulfur ATP-binding protein of Cyanothece sp. (strain PCC 7425 / ATCC 29141).